A 171-amino-acid chain; its full sequence is MPYSLEEQTYFMQEALKEAEKSLQKAEIPIGCVIVKDGEIIGRGHNAREESNQAIMHAEMMAINEANAHEGNWRLLDTTLFVTIEPCVMCSGAIGLARIPHVIYGASNQKFGGADSLYQILTDERLNHRVQVERGLLAADCANIMQTFFRQGRERKKIAKHLIKEQSDPFD.

The region spanning 6–133 (EEQTYFMQEA…ERLNHRVQVE (128 aa)) is the CMP/dCMP-type deaminase domain. Histidine 57 is a Zn(2+) binding site. Glutamate 59 (proton donor) is an active-site residue. Zn(2+) contacts are provided by cysteine 87 and cysteine 90.

The protein belongs to the cytidine and deoxycytidylate deaminase family. As to quaternary structure, homodimer. The cofactor is Zn(2+).

It carries out the reaction adenosine(34) in tRNA + H2O + H(+) = inosine(34) in tRNA + NH4(+). Its function is as follows. Catalyzes the deamination of adenosine to inosine at the wobble position 34 of tRNA(Arg2). This is tRNA-specific adenosine deaminase from Streptococcus pyogenes serotype M3 (strain ATCC BAA-595 / MGAS315).